The following is a 637-amino-acid chain: tRNA uridine 5-carboxymethylaminomethyl modification enzyme MnmG (637 aa).

Residues 15-20 (GAGHAG), I127, and S182 each bind FAD. NAD(+) is bound at residue 276-290 (GPRYCPSIEDKIVRF). FAD is bound at residue Q373.

Belongs to the MnmG family. As to quaternary structure, homodimer. Heterotetramer of two MnmE and two MnmG subunits. FAD serves as cofactor.

Its subcellular location is the cytoplasm. In terms of biological role, NAD-binding protein involved in the addition of a carboxymethylaminomethyl (cmnm) group at the wobble position (U34) of certain tRNAs, forming tRNA-cmnm(5)s(2)U34. The protein is tRNA uridine 5-carboxymethylaminomethyl modification enzyme MnmG of Streptococcus pneumoniae serotype 4 (strain ATCC BAA-334 / TIGR4).